Consider the following 371-residue polypeptide: Cytochrome b (371 aa).

Transmembrane regions (helical) follow at residues 25 to 45, 69 to 90, 105 to 125, and 170 to 190; these read FGSM…FLAI, WTMQ…YIHI, WLSG…GYVL, and FFAL…AHIM. 2 residues coordinate heme b: His75 and His89. Heme b-binding residues include His174 and His188. Residue His193 participates in a ubiquinone binding. The next 4 helical transmembrane spans lie at 218-238, 280-300, 312-332, and 339-358; these read NKDM…LSFL, LGGT…PFTH, MTQT…WTAT, and FMFI…FMNP.

This sequence belongs to the cytochrome b family. The cytochrome bc1 complex contains 3 respiratory subunits (MT-CYB, CYC1 and UQCRFS1), 2 core proteins (UQCRC1 and UQCRC2) and probably 6 low-molecular weight proteins. The cofactor is heme b.

It localises to the mitochondrion inner membrane. Component of the ubiquinol-cytochrome c reductase complex (complex III or cytochrome b-c1 complex) that is part of the mitochondrial respiratory chain. The b-c1 complex mediates electron transfer from ubiquinol to cytochrome c. Contributes to the generation of a proton gradient across the mitochondrial membrane that is then used for ATP synthesis. The polypeptide is Cytochrome b (MT-CYB) (Elapsoidea nigra (Usambara garter snake)).